Consider the following 596-residue polypeptide: Serine/threonine-protein kinase PknH (596 aa).

At 1–373 (MSDAQDSRVG…QTPRKTNPWP (373 aa)) the chain is on the cytoplasmic side. In terms of domain architecture, Protein kinase spans 16 to 276 (YHLKRLLGRG…DLALAAHEAL (261 aa)). Residues 22–30 (LGRGGMGEV) and Lys-45 each bind ATP. The active-site Proton acceptor is Asp-139. At Thr-170 the chain carries Phosphothreonine. A disordered region spans residues 292 to 368 (QESTLPGTAA…PSPWAQTPRK (77 aa)). The segment covering 307–318 (PTMPTVTPPPIQ) has biased composition (pro residues). A helical membrane pass occupies residues 374-394 (LVAGAAAVVLVLVLGAIGIWI). Topologically, residues 395 to 596 (ANRPKPVQPP…AKIVDKVNKE (202 aa)) are extracellular.

The protein belongs to the protein kinase superfamily. Ser/Thr protein kinase family. Post-translationally, autophosphorylated on threonine and serine residues.

It localises to the cell membrane. The catalysed reaction is L-seryl-[protein] + ATP = O-phospho-L-seryl-[protein] + ADP + H(+). It carries out the reaction L-threonyl-[protein] + ATP = O-phospho-L-threonyl-[protein] + ADP + H(+). This chain is Serine/threonine-protein kinase PknH (pknH), found in Mycobacterium bovis (strain ATCC BAA-935 / AF2122/97).